Consider the following 240-residue polypeptide: Ubiquinone biosynthesis O-methyltransferase (240 aa).

Positions 44, 64, 85, and 129 each coordinate S-adenosyl-L-methionine.

This sequence belongs to the methyltransferase superfamily. UbiG/COQ3 family.

The catalysed reaction is a 3-demethylubiquinol + S-adenosyl-L-methionine = a ubiquinol + S-adenosyl-L-homocysteine + H(+). The enzyme catalyses a 3-(all-trans-polyprenyl)benzene-1,2-diol + S-adenosyl-L-methionine = a 2-methoxy-6-(all-trans-polyprenyl)phenol + S-adenosyl-L-homocysteine + H(+). It functions in the pathway cofactor biosynthesis; ubiquinone biosynthesis. Its function is as follows. O-methyltransferase that catalyzes the 2 O-methylation steps in the ubiquinone biosynthetic pathway. The protein is Ubiquinone biosynthesis O-methyltransferase of Escherichia coli O6:H1 (strain CFT073 / ATCC 700928 / UPEC).